We begin with the raw amino-acid sequence, 393 residues long: NAD(P)H-quinone oxidoreductase subunit H, chloroplastic (393 aa).

It belongs to the complex I 49 kDa subunit family. NDH is composed of at least 16 different subunits, 5 of which are encoded in the nucleus.

It localises to the plastid. Its subcellular location is the chloroplast thylakoid membrane. The enzyme catalyses a plastoquinone + NADH + (n+1) H(+)(in) = a plastoquinol + NAD(+) + n H(+)(out). It carries out the reaction a plastoquinone + NADPH + (n+1) H(+)(in) = a plastoquinol + NADP(+) + n H(+)(out). Its function is as follows. NDH shuttles electrons from NAD(P)H:plastoquinone, via FMN and iron-sulfur (Fe-S) centers, to quinones in the photosynthetic chain and possibly in a chloroplast respiratory chain. The immediate electron acceptor for the enzyme in this species is believed to be plastoquinone. Couples the redox reaction to proton translocation, and thus conserves the redox energy in a proton gradient. This is NAD(P)H-quinone oxidoreductase subunit H, chloroplastic from Zygnema circumcarinatum (Green alga).